The following is a 370-amino-acid chain: 3,5-dihydroxyphenylacetyl-CoA synthase (370 aa).

Cys158 is an active-site residue.

This sequence belongs to the thiolase-like superfamily. Chalcone/stilbene synthases family.

It catalyses the reaction 4 malonyl-CoA + 4 H(+) = (3,5-dihydroxyphenyl)acetyl-CoA + 4 CO2 + 3 CoA + H2O. It functions in the pathway antibiotic biosynthesis; vancomycin biosynthesis. In terms of biological role, involved in the biosynthesis of the nonproteinogenic amino acid monomer (S)-3,5-dihydroxyphenylglycine (Dpg) responsible of the production of vancomycin and teicoplanin antibiotics. Catalyzes the Claisen condensation of four molecules of malonyl-CoA to yield 3,5-dihydroxyphenylacetyl-CoA (DPA-CoA) and three free coenzyme A (CoA). DpgA requires the presence of the dehydratases DpgB and DpgD to facilitate the aromatization of the DPA-S-DgpA or DPA-S-CoA intermediate. The polypeptide is 3,5-dihydroxyphenylacetyl-CoA synthase (dpgA) (Amycolatopsis orientalis (Nocardia orientalis)).